Here is a 417-residue protein sequence, read N- to C-terminus: Gamma-glutamyl phosphate reductase (417 aa).

It belongs to the gamma-glutamyl phosphate reductase family.

Its subcellular location is the cytoplasm. It carries out the reaction L-glutamate 5-semialdehyde + phosphate + NADP(+) = L-glutamyl 5-phosphate + NADPH + H(+). It functions in the pathway amino-acid biosynthesis; L-proline biosynthesis; L-glutamate 5-semialdehyde from L-glutamate: step 2/2. Catalyzes the NADPH-dependent reduction of L-glutamate 5-phosphate into L-glutamate 5-semialdehyde and phosphate. The product spontaneously undergoes cyclization to form 1-pyrroline-5-carboxylate. This Escherichia fergusonii (strain ATCC 35469 / DSM 13698 / CCUG 18766 / IAM 14443 / JCM 21226 / LMG 7866 / NBRC 102419 / NCTC 12128 / CDC 0568-73) protein is Gamma-glutamyl phosphate reductase.